A 363-amino-acid chain; its full sequence is Holliday junction branch migration complex subunit RuvB (363 aa).

Residues 1–32 form a disordered region; it reads MAIQTDSFAAAPAPSSGSTRRLISAAPTSPNE. The segment covering 7 to 18 has biased composition (low complexity); that stretch reads SFAAAPAPSSGS. The tract at residues 13–200 is large ATPase domain (RuvB-L); the sequence is APSSGSTRRL…FGIVARLEFY (188 aa). Residues Leu39, Arg40, Gly81, Lys84, Thr85, Thr86, 147 to 149, Arg190, Tyr200, and Arg237 each bind ATP; that span reads EDY. Thr85 provides a ligand contact to Mg(2+). The interval 201-271 is small ATPAse domain (RuvB-S); it reads TPEELVRIVT…IAELALTMLD (71 aa). Positions 274-363 are head domain (RuvB-H); the sequence is PRGFDVMDRK…GPVGSDLFEG (90 aa). DNA is bound by residues Arg329 and Arg334.

This sequence belongs to the RuvB family. Homohexamer. Forms an RuvA(8)-RuvB(12)-Holliday junction (HJ) complex. HJ DNA is sandwiched between 2 RuvA tetramers; dsDNA enters through RuvA and exits via RuvB. An RuvB hexamer assembles on each DNA strand where it exits the tetramer. Each RuvB hexamer is contacted by two RuvA subunits (via domain III) on 2 adjacent RuvB subunits; this complex drives branch migration. In the full resolvosome a probable DNA-RuvA(4)-RuvB(12)-RuvC(2) complex forms which resolves the HJ.

It localises to the cytoplasm. The catalysed reaction is ATP + H2O = ADP + phosphate + H(+). Its function is as follows. The RuvA-RuvB-RuvC complex processes Holliday junction (HJ) DNA during genetic recombination and DNA repair, while the RuvA-RuvB complex plays an important role in the rescue of blocked DNA replication forks via replication fork reversal (RFR). RuvA specifically binds to HJ cruciform DNA, conferring on it an open structure. The RuvB hexamer acts as an ATP-dependent pump, pulling dsDNA into and through the RuvAB complex. RuvB forms 2 homohexamers on either side of HJ DNA bound by 1 or 2 RuvA tetramers; 4 subunits per hexamer contact DNA at a time. Coordinated motions by a converter formed by DNA-disengaged RuvB subunits stimulates ATP hydrolysis and nucleotide exchange. Immobilization of the converter enables RuvB to convert the ATP-contained energy into a lever motion, pulling 2 nucleotides of DNA out of the RuvA tetramer per ATP hydrolyzed, thus driving DNA branch migration. The RuvB motors rotate together with the DNA substrate, which together with the progressing nucleotide cycle form the mechanistic basis for DNA recombination by continuous HJ branch migration. Branch migration allows RuvC to scan DNA until it finds its consensus sequence, where it cleaves and resolves cruciform DNA. This Leptothrix cholodnii (strain ATCC 51168 / LMG 8142 / SP-6) (Leptothrix discophora (strain SP-6)) protein is Holliday junction branch migration complex subunit RuvB.